A 419-amino-acid chain; its full sequence is UDP-N-acetylglucosamine 1-carboxyvinyltransferase (419 aa).

Phosphoenolpyruvate is bound at residue 22–23 (KN). Arg-93 is a UDP-N-acetyl-alpha-D-glucosamine binding site. Cys-117 (proton donor) is an active-site residue. A 2-(S-cysteinyl)pyruvic acid O-phosphothioketal modification is found at Cys-117. The UDP-N-acetyl-alpha-D-glucosamine site is built by Asp-307 and Ile-329.

The protein belongs to the EPSP synthase family. MurA subfamily.

Its subcellular location is the cytoplasm. The catalysed reaction is phosphoenolpyruvate + UDP-N-acetyl-alpha-D-glucosamine = UDP-N-acetyl-3-O-(1-carboxyvinyl)-alpha-D-glucosamine + phosphate. It functions in the pathway cell wall biogenesis; peptidoglycan biosynthesis. Its function is as follows. Cell wall formation. Adds enolpyruvyl to UDP-N-acetylglucosamine. This chain is UDP-N-acetylglucosamine 1-carboxyvinyltransferase, found in Shewanella baltica (strain OS195).